An 80-amino-acid polypeptide reads, in one-letter code: Large ribosomal subunit protein uL24 (80 aa).

A disordered region spans residues His53–Ser80.

It belongs to the universal ribosomal protein uL24 family. As to quaternary structure, part of the 50S ribosomal subunit.

Functionally, one of two assembly initiator proteins, it binds directly to the 5'-end of the 23S rRNA, where it nucleates assembly of the 50S subunit. Its function is as follows. One of the proteins that surrounds the polypeptide exit tunnel on the outside of the subunit. This chain is Large ribosomal subunit protein uL24, found in Pelodictyon phaeoclathratiforme (strain DSM 5477 / BU-1).